The primary structure comprises 526 residues: Threonine synthase 1, chloroplastic (526 aa).

The N-terminal 40 residues, 1–40 (MASSCLFNASVSSLNPKQDPIRRHRSTSLLRHRPVVISCT), are a transit peptide targeting the chloroplast. S-adenosyl-L-methionine is bound by residues 142–144 (PYG), 165–167 (SAF), asparagine 172, leucine 173, lysine 181, and asparagine 187. Lysine 203 bears the N6-(pyridoxal phosphate)lysine mark. Residues 335–339 (GNLGN) and threonine 472 contribute to the pyridoxal 5'-phosphate site.

This sequence belongs to the threonine synthase family. Homodimer. The cofactor is pyridoxal 5'-phosphate.

It localises to the plastid. It is found in the chloroplast. The enzyme catalyses O-phospho-L-homoserine + H2O = L-threonine + phosphate. It functions in the pathway amino-acid biosynthesis; L-threonine biosynthesis; L-threonine from L-aspartate: step 5/5. Allosterically activated by S-adenosyl-L-methionine (SAM). Activated by S-adenosyl-L-ethionine, 5'-amino-5'-deoxyadenosine, sinefungin and 5'-deoxy-5-methylthioadenosine. Inhibited by AMP. Catalyzes the gamma-elimination of phosphate from L-phosphohomoserine and the beta-addition of water to produce L-threonine. In Arabidopsis thaliana (Mouse-ear cress), this protein is Threonine synthase 1, chloroplastic (TS1).